We begin with the raw amino-acid sequence, 276 residues long: Diaminopimelate epimerase (276 aa).

Positions 13, 46, and 66 each coordinate substrate. Residue cysteine 75 is the Proton donor of the active site. Substrate contacts are provided by residues 76–77 (GN), asparagine 159, asparagine 192, and 210–211 (ER). Cysteine 219 acts as the Proton acceptor in catalysis. 220–221 (GS) provides a ligand contact to substrate.

Belongs to the diaminopimelate epimerase family. As to quaternary structure, homodimer.

It localises to the cytoplasm. It catalyses the reaction (2S,6S)-2,6-diaminopimelate = meso-2,6-diaminopimelate. It functions in the pathway amino-acid biosynthesis; L-lysine biosynthesis via DAP pathway; DL-2,6-diaminopimelate from LL-2,6-diaminopimelate: step 1/1. Catalyzes the stereoinversion of LL-2,6-diaminopimelate (L,L-DAP) to meso-diaminopimelate (meso-DAP), a precursor of L-lysine and an essential component of the bacterial peptidoglycan. In Vibrio vulnificus (strain CMCP6), this protein is Diaminopimelate epimerase.